A 309-amino-acid chain; its full sequence is Succinoglycan biosynthesis protein ExoM (309 aa).

It belongs to the glycosyltransferase 2 family.

It localises to the cell inner membrane. Its pathway is glycan metabolism; exopolysaccharide biosynthesis. In terms of biological role, glycosyltransferase required for the synthesis of succinoglycan (EPS I). Needed for the addition of the fourth sugar (glucose), catalyzes the formation of a beta-1,4 linkage between the third acetylated sugar and the fourth sugar. The chain is Succinoglycan biosynthesis protein ExoM (exoM) from Rhizobium meliloti (strain 1021) (Ensifer meliloti).